The chain runs to 479 residues: Cardiolipin synthase A (479 aa).

The next 2 membrane-spanning stretches (helical) occupy residues 8-28 and 38-58; these read FFGYLIGLIHLLGIIAALHAV and IAWALSLLFIPYFTLIPYLIF. 2 consecutive PLD phosphodiesterase domains span residues 218–245 and 392–419; these read VNFRNHRKIVVVDGLRGFLGGHNVGDEY and QPGFLHQKVVLVDDEVSAIGSANLDNRS. Residues His-223, Lys-225, Asp-230, His-397, Lys-399, and Asp-404 contribute to the active site.

This sequence belongs to the phospholipase D family. Cardiolipin synthase subfamily. ClsA sub-subfamily.

Its subcellular location is the cell inner membrane. It catalyses the reaction 2 a 1,2-diacyl-sn-glycero-3-phospho-(1'-sn-glycerol) = a cardiolipin + glycerol. Its function is as follows. Catalyzes the reversible phosphatidyl group transfer from one phosphatidylglycerol molecule to another to form cardiolipin (CL) (diphosphatidylglycerol) and glycerol. This is Cardiolipin synthase A from Pseudomonas entomophila (strain L48).